The chain runs to 85 residues: Large ribosomal subunit protein bL27 (85 aa).

The disordered stretch occupies residues 1–25; it reads MAHKKAGSSSKNGRDSNPQYLGVKR. The span at 7 to 19 shows a compositional bias: polar residues; sequence GSSSKNGRDSNPQ.

It belongs to the bacterial ribosomal protein bL27 family.

This is Large ribosomal subunit protein bL27 from Micrococcus luteus (strain ATCC 4698 / DSM 20030 / JCM 1464 / CCM 169 / CCUG 5858 / IAM 1056 / NBRC 3333 / NCIMB 9278 / NCTC 2665 / VKM Ac-2230) (Micrococcus lysodeikticus).